Reading from the N-terminus, the 315-residue chain is Methenyltetrahydromethanopterin cyclohydrolase (315 aa).

Belongs to the MCH family.

It localises to the cytoplasm. The catalysed reaction is 5,10-methenyl-5,6,7,8-tetrahydromethanopterin + H2O = N(5)-formyl-5,6,7,8-tetrahydromethanopterin + H(+). It functions in the pathway one-carbon metabolism; methanogenesis from CO(2); 5,10-methenyl-5,6,7,8-tetrahydromethanopterin from CO(2): step 3/3. Catalyzes the reversible interconversion of 5-formyl-H(4)MPT to methenyl-H(4)MPT(+). The chain is Methenyltetrahydromethanopterin cyclohydrolase from Methanospirillum hungatei JF-1 (strain ATCC 27890 / DSM 864 / NBRC 100397 / JF-1).